Here is a 655-residue protein sequence, read N- to C-terminus: Very long-chain specific acyl-CoA dehydrogenase, mitochondrial (655 aa).

The N-terminal 40 residues, 1 to 40 (MQAARMAASLGRQLLRLGGGSSRLTALLGQPRPGPARRPY), are a transit peptide targeting the mitochondrion. The interval 23-42 (RLTALLGQPRPGPARRPYAG) is disordered. The catalytic stretch occupies residues 41 to 482 (AGGAAQLALD…ALQGCMDKGK (442 aa)). N6-acetyllysine is present on K51. K71 is subject to N6-acetyllysine; alternate. K71 is modified (N6-succinyllysine; alternate). An N6-succinyllysine modification is found at K195. 214–223 (FCLTEPSSGS) lines the FAD pocket. C237 is subject to S-nitrosocysteine. K239 is subject to N6-acetyllysine; alternate. K239 is subject to N6-succinyllysine; alternate. 249–251 (WIS) provides a ligand contact to FAD. K276 and K278 each carry N6-acetyllysine; alternate. An N6-succinyllysine; alternate mark is found at K276 and K278. Position 298 is an N6-acetyllysine (K298). K331 bears the N6-acetyllysine; alternate mark. N6-succinyllysine; alternate is present on K331. K372 carries the post-translational modification N6-succinyllysine. Position 461 to 463 (461 to 463 (FEG)) interacts with substrate. E462 (proton acceptor) is an active-site residue. 464 to 466 (TND) is an FAD binding site. K482 is subject to N6-acetyllysine; alternate. K482 is modified (N6-succinyllysine; alternate). The segment at 483–516 (ELSGLGSALKNPFGNAGLLLGEAGKQLRRRAGLG) is membrane-anchoring. Phosphoserine occurs at positions 517 and 522. Position 550 is an N6-acetyllysine (K550). K556 carries the post-translational modification N6-acetyllysine; alternate. At K556 the chain carries N6-succinyllysine; alternate. Q562 contacts FAD. K639 is modified (N6-succinyllysine).

It belongs to the acyl-CoA dehydrogenase family. Homodimer. Homodimerizes after import into the mitochondrion. Requires FAD as cofactor. Post-translationally, S-nitrosylation at Cys-237 in liver improves catalytic efficiency. In terms of tissue distribution, predominantly expressed in heart and skeletal muscle (at protein level). Also detected in kidney and liver (at protein level).

It localises to the mitochondrion inner membrane. The enzyme catalyses a very-long-chain 2,3-saturated fatty acyl-CoA + oxidized [electron-transfer flavoprotein] + H(+) = a very-long-chain (2E)-enoyl-CoA + reduced [electron-transfer flavoprotein]. It catalyses the reaction decanoyl-CoA + oxidized [electron-transfer flavoprotein] + H(+) = (2E)-decenoyl-CoA + reduced [electron-transfer flavoprotein]. The catalysed reaction is dodecanoyl-CoA + oxidized [electron-transfer flavoprotein] + H(+) = (2E)-dodecenoyl-CoA + reduced [electron-transfer flavoprotein]. It carries out the reaction tetradecanoyl-CoA + oxidized [electron-transfer flavoprotein] + H(+) = (2E)-tetradecenoyl-CoA + reduced [electron-transfer flavoprotein]. The enzyme catalyses oxidized [electron-transfer flavoprotein] + hexadecanoyl-CoA + H(+) = (2E)-hexadecenoyl-CoA + reduced [electron-transfer flavoprotein]. It catalyses the reaction octadecanoyl-CoA + oxidized [electron-transfer flavoprotein] + H(+) = (2E)-octadecenoyl-CoA + reduced [electron-transfer flavoprotein]. The catalysed reaction is eicosanoyl-CoA + oxidized [electron-transfer flavoprotein] + H(+) = (2E)-eicosenoyl-CoA + reduced [electron-transfer flavoprotein]. It carries out the reaction docosanoyl-CoA + oxidized [electron-transfer flavoprotein] + H(+) = (2E)-docosenoyl-CoA + reduced [electron-transfer flavoprotein]. The enzyme catalyses tetracosanoyl-CoA + oxidized [electron-transfer flavoprotein] + H(+) = (2E)-tetracosenoyl-CoA + reduced [electron-transfer flavoprotein]. It catalyses the reaction (9Z)-hexadecenoyl-CoA + oxidized [electron-transfer flavoprotein] + H(+) = (2E,9Z)-hexadecadienoyl-CoA + reduced [electron-transfer flavoprotein]. The catalysed reaction is oxidized [electron-transfer flavoprotein] + (9Z)-octadecenoyl-CoA + H(+) = (2E,9Z)-octadecadienoyl-CoA + reduced [electron-transfer flavoprotein]. The protein operates within lipid metabolism; mitochondrial fatty acid beta-oxidation. Functionally, very long-chain specific acyl-CoA dehydrogenase is one of the acyl-CoA dehydrogenases that catalyze the first step of mitochondrial fatty acid beta-oxidation, an aerobic process breaking down fatty acids into acetyl-CoA and allowing the production of energy from fats. The first step of fatty acid beta-oxidation consists in the removal of one hydrogen from C-2 and C-3 of the straight-chain fatty acyl-CoA thioester, resulting in the formation of trans-2-enoyl-CoA. Among the different mitochondrial acyl-CoA dehydrogenases, very long-chain specific acyl-CoA dehydrogenase acts specifically on acyl-CoAs with saturated 12 to 24 carbons long primary chains. This is Very long-chain specific acyl-CoA dehydrogenase, mitochondrial from Homo sapiens (Human).